Here is a 309-residue protein sequence, read N- to C-terminus: Tagatose-6-phosphate kinase (309 aa).

The protein belongs to the carbohydrate kinase PfkB family. LacC subfamily.

The catalysed reaction is D-tagatofuranose 6-phosphate + ATP = D-tagatofuranose 1,6-bisphosphate + ADP + H(+). It participates in carbohydrate metabolism; D-tagatose 6-phosphate degradation; D-glyceraldehyde 3-phosphate and glycerone phosphate from D-tagatose 6-phosphate: step 1/2. This Streptococcus pneumoniae serotype 19F (strain G54) protein is Tagatose-6-phosphate kinase.